The primary structure comprises 928 residues: DNA-binding protein RFX6 (928 aa).

Disordered regions lie at residues 1–20 (MAKVPELEDTFLQAQPAPQL) and 50–98 (EGQP…SKTK). Residues 124–199 (TLQWLEENYI…YHYYGIGIKE (76 aa)) constitute a DNA-binding region (RFX-type winged-helix).

It belongs to the RFX family. As to quaternary structure, interacts with RFX3. In terms of tissue distribution, expressed in pancreas. Expressed in pancreatic beta-cells (insulin-positive cells) and alpha-cells (glucagon-positive cells) (at protein level). Specifically expressed in pancreas, small intestine and colon. Expressed in endocrine cells in the islets.

It localises to the nucleus. Its function is as follows. Transcription factor required to direct islet cell differentiation during endocrine pancreas development. Specifically required for the differentiation of 4 of the 5 islet cell types and for the production of insulin. Not required for pancreatic PP (polypeptide-producing) cells differentiation. Acts downstream of NEUROG3 and regulates the transcription factors involved in beta-cell maturation and function, thereby restricting the expression of the beta-cell differentiation and specification genes, and thus the beta-cell fate choice. Activates transcription by forming a heterodimer with RFX3 and binding to the X-box in the promoter of target genes. Involved in glucose-stimulated insulin secretion by promoting insulin and L-type calcium channel gene transcription. The sequence is that of DNA-binding protein RFX6 (RFX6) from Homo sapiens (Human).